A 283-amino-acid chain; its full sequence is Heavy metal-associated isoprenylated plant protein 3 (283 aa).

Over residues 1 to 22 (MGEKKNEGDNKKKGGDNKKKNE) the composition is skewed to basic and acidic residues. The tract at residues 1–26 (MGEKKNEGDNKKKGGDNKKKNETPSI) is disordered. HMA domains are found at residues 25 to 88 (SITV…KKKV) and 132 to 195 (VTTA…KRAV). Residues cysteine 36 and cysteine 39 each coordinate Zn(2+). Positions 82–129 (EKTKKKVDLVSPQPKKEKEKENKNKNDEDKKKSEEKKKPDNNDKKPKE) are enriched in basic and acidic residues. The disordered stretch occupies residues 82–131 (EKTKKKVDLVSPQPKKEKEKENKNKNDEDKKKSEEKKKPDNNDKKPKETP). Residues cysteine 143 and cysteine 146 each contribute to the Zn(2+) site. The span at 198 to 230 (VPPKKEKDKENGNENGEKKKGGGGDGGGKEKTG) shows a compositional bias: basic and acidic residues. The tract at residues 198–238 (VPPKKEKDKENGNENGEKKKGGGGDGGGKEKTGNKGGGEGV) is disordered. Cysteine 280 is modified (cysteine methyl ester). Cysteine 280 carries S-farnesyl cysteine lipidation. Positions 281-283 (VVM) are cleaved as a propeptide — removed in mature form.

The protein belongs to the HIPP family.

It localises to the nucleus. It is found in the nucleolus. The protein localises to the cytoplasm. In terms of biological role, heavy-metal-binding protein. Binds high amounts of zinc. May act as an upstream regulator of the salicylate-dependent pathogen response. Involved in abiotic stress responses, and seed and flower development. This is Heavy metal-associated isoprenylated plant protein 3 from Arabidopsis thaliana (Mouse-ear cress).